The sequence spans 637 residues: Threonine--tRNA ligase (637 aa).

Residues 1–61 (MLNITLPDGS…VEDSAVQIIT (61 aa)) form the TGS domain. The segment at 242–533 (DHRKLGKQLD…LIENHAGSFP (292 aa)) is catalytic. Zn(2+) is bound by residues cysteine 333, histidine 384, and histidine 510.

The protein belongs to the class-II aminoacyl-tRNA synthetase family. As to quaternary structure, homodimer. The cofactor is Zn(2+).

It is found in the cytoplasm. It carries out the reaction tRNA(Thr) + L-threonine + ATP = L-threonyl-tRNA(Thr) + AMP + diphosphate + H(+). Its function is as follows. Catalyzes the attachment of threonine to tRNA(Thr) in a two-step reaction: L-threonine is first activated by ATP to form Thr-AMP and then transferred to the acceptor end of tRNA(Thr). Also edits incorrectly charged L-seryl-tRNA(Thr). The chain is Threonine--tRNA ligase from Neisseria meningitidis serogroup B (strain ATCC BAA-335 / MC58).